A 122-amino-acid polypeptide reads, in one-letter code: Aspartate 1-decarboxylase (122 aa).

Residue serine 25 is the Schiff-base intermediate with substrate; via pyruvic acid of the active site. Residue serine 25 is modified to Pyruvic acid (Ser). Threonine 57 serves as a coordination point for substrate. Tyrosine 58 serves as the catalytic Proton donor. 73 to 75 (GAA) lines the substrate pocket.

Belongs to the PanD family. Heterooctamer of four alpha and four beta subunits. The cofactor is pyruvate. Post-translationally, is synthesized initially as an inactive proenzyme, which is activated by self-cleavage at a specific serine bond to produce a beta-subunit with a hydroxyl group at its C-terminus and an alpha-subunit with a pyruvoyl group at its N-terminus.

The protein localises to the cytoplasm. The catalysed reaction is L-aspartate + H(+) = beta-alanine + CO2. The protein operates within cofactor biosynthesis; (R)-pantothenate biosynthesis; beta-alanine from L-aspartate: step 1/1. Catalyzes the pyruvoyl-dependent decarboxylation of aspartate to produce beta-alanine. The chain is Aspartate 1-decarboxylase from Bordetella parapertussis (strain 12822 / ATCC BAA-587 / NCTC 13253).